We begin with the raw amino-acid sequence, 1033 residues long: Probable LRR receptor-like serine/threonine-protein kinase At1g56140 (1033 aa).

Positions 1 to 28 are cleaved as a signal peptide; the sequence is MLRLWRYLCLLLTVWFLCNFGPVYVVRA. At 29-636 the chain is on the extracellular side; that stretch reads QNRTGATTHP…PSKGKSMTGT (608 aa). Residues asparagine 30, asparagine 60, and asparagine 94 are each glycosylated (N-linked (GlcNAc...) asparagine). 13 LRR repeats span residues 97–121, 122–145, 147–169, 170–193, 195–217, 241–264, 265–288, 289–313, 314–337, 339–361, 363–382, 383–406, and 422–445; these read ICRI…LWTL, EYLT…LGNL, RMRW…IGLL, TDLR…IGRC, KLQQ…FANL, WTKL…SFSN, LTSL…FIKD, MKSL…IGEY, SSLR…LFNL, QLTH…KGQS, SNVD…WVSL, PNLN…VLSG, and IYSD…VFER. Asparagine 144 carries N-linked (GlcNAc...) asparagine glycosylation. Asparagine 181 carries an N-linked (GlcNAc...) asparagine glycan. 3 N-linked (GlcNAc...) asparagine glycosylation sites follow: asparagine 264, asparagine 280, and asparagine 301. Residues asparagine 347 and asparagine 351 are each glycosylated (N-linked (GlcNAc...) asparagine). A glycan (N-linked (GlcNAc...) asparagine) is linked at asparagine 393. Asparagine 579 carries N-linked (GlcNAc...) asparagine glycosylation. Residues 637 to 657 traverse the membrane as a helical segment; the sequence is IVGVIVGVGLLSIISGVVIFI. The Cytoplasmic segment spans residues 658-1033; it reads IRKRRKRYTD…MLGAQMNEGR (376 aa). Phosphothreonine is present on threonine 682. The 259-residue stretch at 693-951 folds into the Protein kinase domain; the sequence is FDPSNKLGEG…LCTQTSHALR (259 aa). Residues 699–707 and lysine 721 contribute to the ATP site; that span reads LGEGGFGPV. Tyrosine 766 is modified (phosphotyrosine). The active-site Proton acceptor is aspartate 817. Serine 821 and serine 850 each carry phosphoserine. 2 positions are modified to phosphothreonine: threonine 851 and threonine 856. Phosphotyrosine is present on tyrosine 864. The tract at residues 1012–1033 is disordered; it reads SEISPRNNDARPMLGAQMNEGR.

It belongs to the protein kinase superfamily. Ser/Thr protein kinase family.

The protein resides in the membrane. The enzyme catalyses L-seryl-[protein] + ATP = O-phospho-L-seryl-[protein] + ADP + H(+). The catalysed reaction is L-threonyl-[protein] + ATP = O-phospho-L-threonyl-[protein] + ADP + H(+). The chain is Probable LRR receptor-like serine/threonine-protein kinase At1g56140 from Arabidopsis thaliana (Mouse-ear cress).